The primary structure comprises 628 residues: tRNA uridine 5-carboxymethylaminomethyl modification enzyme MnmG (628 aa).

FAD is bound by residues 14-19 (GAGHAG), valine 126, and serine 181. 273–287 (GPRYCPSIEDKVVRF) is a binding site for NAD(+). Glutamine 370 serves as a coordination point for FAD.

This sequence belongs to the MnmG family. Homodimer. Heterotetramer of two MnmE and two MnmG subunits. FAD serves as cofactor.

It localises to the cytoplasm. Functionally, NAD-binding protein involved in the addition of a carboxymethylaminomethyl (cmnm) group at the wobble position (U34) of certain tRNAs, forming tRNA-cmnm(5)s(2)U34. This is tRNA uridine 5-carboxymethylaminomethyl modification enzyme MnmG from Bacillus subtilis (strain 168).